A 389-amino-acid chain; its full sequence is MVTVEEIRRAQRAEGPATIMAIGTATPSNCVDQSTYPDYYFRITNSEHKTELKEKFQRMCDKSMIKKRYMHLTEEILKENPNICEYMAPSLDARQDIVVVEVPKLGKEAAQKAIKEWGQPKSKITHLVFCTTSGVDMPGADYQLTKLLGLRSSVKRLMMYQQGCFAGGTVLRLAKDLAENNKGARVLVVCSEITAVTFRGPNDTHLDSLVGQALFGDGAAAIIIGSDPLPGVERPLFELVSASQTLLPDSEGAIDGHLREVGLTFHLLKDVPGLISKNIQKSLVEAFQPLGISDWNSIFWIAHPGGPAILDQVELKLGLKPEKLRATRHVLSEYGNMSSACVLFILDEMRKASSKEGLGTTGEGLEWGVLFGFGPGLTVETVVLHSVST.

The active site involves C164.

Belongs to the thiolase-like superfamily. Chalcone/stilbene synthases family.

The enzyme catalyses (E)-4-coumaroyl-CoA + 3 malonyl-CoA + 3 H(+) = 2',4,4',6'-tetrahydroxychalcone + 3 CO2 + 4 CoA. The protein operates within secondary metabolite biosynthesis; flavonoid biosynthesis. The primary product of this enzyme is 4,2',4',6'-tetrahydroxychalcone (also termed naringenin-chalcone or chalcone) which can under specific conditions spontaneously isomerize into naringenin. The sequence is that of Chalcone synthase J (CHSJ) from Petunia hybrida (Petunia).